The sequence spans 418 residues: cAMP-dependent protein kinase type II-beta regulatory subunit (418 aa).

The segment at 2–153 is dimerization and phosphorylation; sequence SIEIPAGLTE…RLQEACKDIL (152 aa). Residues 45–57 show a composition bias toward basic and acidic residues; sequence RKGTARFGHEGRT. The disordered stretch occupies residues 45 to 98; it reads RKGTARFGHEGRTWGDAGAAGGGGTPSKGVNFAEEPRHSDSENGEEEEEEAADA. A Phosphothreonine modification is found at threonine 69. Serine 83 and serine 85 each carry phosphoserine. Residues 86–96 show a composition bias toward acidic residues; that stretch reads ENGEEEEEEAA. At serine 114 the chain carries Phosphoserine. 3',5'-cyclic AMP is bound by residues 154–275, glutamate 223, arginine 232, 276–418, glutamate 352, and arginine 361; these read LFKN…ESLP and FLKS…EPTA.

This sequence belongs to the cAMP-dependent kinase regulatory chain family. The inactive form of the enzyme is composed of two regulatory chains and two catalytic chains. Activation by cAMP produces two active catalytic monomers and a regulatory dimer that binds four cAMP molecules. Interacts with PRKACA and PRKACB. Interacts with the phosphorylated form of PJA2. Forms a complex composed of PRKAR2B, GSK3B and GSKIP through GSKIP interaction; facilitates PKA-induced phosphorylation and regulates GSK3B activity. In terms of processing, phosphorylated by the activated catalytic chain. In terms of tissue distribution, four types of regulatory chains are found: I-alpha, I-beta, II-alpha, and II-beta. Their expression varies among tissues and is in some cases constitutive and in others inducible.

It is found in the cytoplasm. Its subcellular location is the cell membrane. In terms of biological role, regulatory subunit of the cAMP-dependent protein kinases involved in cAMP signaling in cells. Type II regulatory chains mediate membrane association by binding to anchoring proteins, including the MAP2 kinase. The polypeptide is cAMP-dependent protein kinase type II-beta regulatory subunit (PRKAR2B) (Bos taurus (Bovine)).